Consider the following 207-residue polypeptide: Thymidylate kinase (207 aa).

7–14 (GPEGAGKS) provides a ligand contact to ATP.

It belongs to the thymidylate kinase family.

It carries out the reaction dTMP + ATP = dTDP + ADP. Its function is as follows. Phosphorylation of dTMP to form dTDP in both de novo and salvage pathways of dTTP synthesis. This Pseudomonas putida (strain W619) protein is Thymidylate kinase.